A 472-amino-acid polypeptide reads, in one-letter code: Replicative helicase loading/DNA remodeling protein DnaB (472 aa).

The interval Met-1–Pro-112 is DDBH1. Residues Asp-210–Ala-302 are DDBH2-1. The DDBH2-2 stretch occupies residues Glu-303–Lys-411. Positions Ser-415–Tyr-472 are disordered. Basic and acidic residues-rich tracts occupy residues Val-421–Ala-437 and His-448–Lys-465.

Belongs to the DnaB/DnaD family. As to quaternary structure, homotetramer. Also forms higher-order oligomers, can be induced by some ssDNA. The DNA replisome assembles sequentially on oriC in this order; DnaA, DnaD, DnaB, DnaI-DnaC helicase. In atomic force microscopy forms a square with a small central hole. Part of the replication restart primosome which assembles in this order; PriA, DnaD then DnaB. The preferred DNA substrate mimics an arrested DNA replication fork with unreplicated lagging strand. Interacts with DnaC, but probably not as a tetramer. Interacts with DnaD but no interaction with PriA was seen. Interacts with cell cycle regulator CcrZ. In terms of processing, in early growth phase only full-length protein is detected, during late growth and stationary phase full-length and C-terminally truncated proteins are seen (at protein level). Truncated protein is only seen in cytoplasmic fractions.

It localises to the cytoplasm. The protein localises to the cell membrane. Its function is as follows. Helps DnaI load the DnaC replicative helicase onto single-stranded (ss)DNA. During DNA replication from the origin of replication (oriC) in the DNA replisome, DnaD is required after DnaA, before DnaB and before subsequent helicase DnaC loading. Component of the replication restart primosome, which reloads the replicative helicase on sites other than oriC. DnaB, DnaD and DnaI may also be required for a PriA-independent pathway of replication fork restart. DnaB and DnaD work together to allow DnaB access to ssDNA. DNA replication at oriC might originate on the inner face of the cell membrane; DnaB is essential for both replication initiation and cell membrane attachment of the origin region of the chromosome and plasmids. Weakly binds ssDNA, preferentially binds double-stranded (ds)DNA, and replication fork-like substrates. Remodels DNA, laterally compacts supercoiled plasmid and linear DNA, forms beads along the dsDNA. Together DnaB and DnaD form bipolar complexes on plasmid DNA. DnaB and DnaD are also required to load helicase on the repN plasmid origin of replication (oriN). The protein is Replicative helicase loading/DNA remodeling protein DnaB of Bacillus subtilis (strain 168).